Here is a 538-residue protein sequence, read N- to C-terminus: 2-isopropylmalate synthase (538 aa).

A Pyruvate carboxyltransferase domain is found at 6-277; it reads LIIFDTTLRD…DSTVPLSTID (272 aa). Residues D15, H206, H208, and N242 each coordinate Mn(2+). Positions 406-538 are regulatory domain; it reads RLEQVQVSCG…AHPDAAAQKL (133 aa).

Belongs to the alpha-IPM synthase/homocitrate synthase family. LeuA type 1 subfamily. Homodimer. It depends on Mn(2+) as a cofactor.

The protein resides in the cytoplasm. The enzyme catalyses 3-methyl-2-oxobutanoate + acetyl-CoA + H2O = (2S)-2-isopropylmalate + CoA + H(+). The protein operates within amino-acid biosynthesis; L-leucine biosynthesis; L-leucine from 3-methyl-2-oxobutanoate: step 1/4. In terms of biological role, catalyzes the condensation of the acetyl group of acetyl-CoA with 3-methyl-2-oxobutanoate (2-ketoisovalerate) to form 3-carboxy-3-hydroxy-4-methylpentanoate (2-isopropylmalate). The sequence is that of 2-isopropylmalate synthase from Gloeobacter violaceus (strain ATCC 29082 / PCC 7421).